The following is a 131-amino-acid chain: POU domain, class 3, transcription factor 3 (131 aa).

The POU-specific domain occupies 1 to 60 (FTQRRMKLGFTQADVGLALGTLYGNVFSQTTICRFEALQLSFKNMCKLKPLLNKWLEEAD). A DNA-binding region (homeobox) is located at residues 78 to 131 (KRKKRTSIEVSVKGALESHFLKCPKPSAQEITNLADSLQLEKEVVRVWFCNNLQ).

The protein belongs to the POU transcription factor family. Class-3 subfamily. In terms of assembly, homodimer. As to expression, brain.

The protein resides in the nucleus. In terms of biological role, transcription factor that acts synergistically with SOX11 and SOX4. Plays a role in neuronal development. Is implicated in an enhancer activity at the embryonic met-mesencephalic junction; the enhancer element contains the octamer motif (5'-ATTTGCAT-3'). The chain is POU domain, class 3, transcription factor 3 (POU3F3) from Sus scrofa (Pig).